Here is a 212-residue protein sequence, read N- to C-terminus: Protein ERP5 (212 aa).

The signal sequence occupies residues 1 to 20; it reads MKYNIVHGICLLFAITQAVG. Residues 21-178 lie on the Lumenal side of the membrane; sequence AVHFYAKSGE…FRNQSESANS (158 aa). In terms of domain architecture, GOLD spans 31 to 124; it reads TKCFYEHLSR…TLRVFIELEI (94 aa). N171 is a glycosylation site (N-linked (GlcNAc...) asparagine). The chain crosses the membrane as a helical span at residues 179-199; that stretch reads KIMTWSVFQLLILLGTCAFQL. Residues 200–212 are Cytoplasmic-facing; that stretch reads RYLKNFFVKQKVV.

It belongs to the EMP24/GP25L family.

Its subcellular location is the endoplasmic reticulum membrane. Involved in vesicular protein trafficking. The chain is Protein ERP5 (ERP5) from Saccharomyces cerevisiae (strain ATCC 204508 / S288c) (Baker's yeast).